The following is a 329-amino-acid chain: Tryptophan--tRNA ligase (329 aa).

Residues 9 to 11 (QPS) and 17 to 18 (GN) each bind ATP. The 'HIGH' region motif lies at 10–18 (PSGTITLGN). Residue aspartate 132 coordinates L-tryptophan. ATP contacts are provided by residues 144–146 (GDD), valine 183, and 192–196 (KMSKS). Residues 192–196 (KMSKS) carry the 'KMSKS' region motif.

It belongs to the class-I aminoacyl-tRNA synthetase family. As to quaternary structure, homodimer.

The protein localises to the cytoplasm. The catalysed reaction is tRNA(Trp) + L-tryptophan + ATP = L-tryptophyl-tRNA(Trp) + AMP + diphosphate + H(+). Functionally, catalyzes the attachment of tryptophan to tRNA(Trp). In Bacillus anthracis, this protein is Tryptophan--tRNA ligase.